The sequence spans 597 residues: Alkyldihydroxyacetonephosphate synthase (597 aa).

In terms of domain architecture, FAD-binding PCMH-type spans 131 to 313 (IPRLPDIVVW…SEVTIKIFPI (183 aa)). FAD-binding positions include 163–169 (PIGGGTS), 232–238 (DSIEFST), 245–248 (TRAS), and 297–303 (EGTLGVV). Residue R444 participates in substrate binding. The Proton donor/acceptor role is filled by Y507. The important for enzyme activity stretch occupies residues 544–546 (HHH). The short motif at 595–597 (CKL) is the Microbody targeting signal element.

Belongs to the FAD-binding oxidoreductase/transferase type 4 family. In terms of assembly, homodimer. It depends on FAD as a cofactor.

It localises to the peroxisome. It catalyses the reaction a long chain fatty alcohol + a 1-acylglycerone 3-phosphate = a 1-O-alkylglycerone 3-phosphate + a long-chain fatty acid + H(+). The protein operates within glycerolipid metabolism; ether lipid biosynthesis. Its function is as follows. Catalyzes the exchange of an acyl for a long-chain alkyl group and the formation of the ether bond in the biosynthesis of ether phospholipids. The protein is Alkyldihydroxyacetonephosphate synthase (ads-1) of Caenorhabditis elegans.